Consider the following 283-residue polypeptide: Cyclin-C (283 aa).

The Cyclin N-terminal domain occupies 20–151 (DLLKERQKDL…LLELMDCCLI (132 aa)). The segment at 252–283 (TILSKMPKPKPPPNSEGEQGPNGSQNSSYSQS) is disordered. The span at 272–283 (PNGSQNSSYSQS) shows a compositional bias: polar residues. Position 275 is a phosphoserine (serine 275).

Belongs to the cyclin family. Cyclin C subfamily. Component of the Mediator complex, which is composed of MED1, MED4, MED6, MED7, MED8, MED9, MED10, MED11, MED12, MED13, MED13L, MED14, MED15, MED16, MED17, MED18, MED19, MED20, MED21, MED22, MED23, MED24, MED25, MED26, MED27, MED29, MED30, MED31, CCNC, CDK8 and CDC2L6/CDK11. The MED12, MED13, CCNC and CDK8 subunits form a distinct module termed the CDK8 module. Mediator containing the CDK8 module is less active than Mediator lacking this module in supporting transcriptional activation. Individual preparations of the Mediator complex lacking one or more distinct subunits have been variously termed ARC, CRSP, DRIP, PC2, SMCC and TRAP. The cylin/CDK pair formed by CCNC/CDK8 also associates with the large subunit of RNA polymerase II.

It localises to the nucleus. Component of the Mediator complex, a coactivator involved in regulated gene transcription of nearly all RNA polymerase II-dependent genes. Mediator functions as a bridge to convey information from gene-specific regulatory proteins to the basal RNA polymerase II transcription machinery. Mediator is recruited to promoters by direct interactions with regulatory proteins and serves as a scaffold for the assembly of a functional preinitiation complex with RNA polymerase II and the general transcription factors. Binds to and activates cyclin-dependent kinase CDK8 that phosphorylates the CTD (C-terminal domain) of the large subunit of RNA polymerase II (RNAp II), which may inhibit the formation of a transcription initiation complex. In Mus musculus (Mouse), this protein is Cyclin-C (Ccnc).